We begin with the raw amino-acid sequence, 199 residues long: NAD(P)H dehydrogenase (quinone) (199 aa).

A Flavodoxin-like domain is found at 4-190 (VLVLYYSSYG…EGARHQGELV (187 aa)). FMN-binding positions include 10–15 (SSYGHI) and 78–80 (TRY). Y12 lines the NAD(+) pocket. W98 is a binding site for substrate. FMN is bound by residues 113-119 (STATQHG) and H134.

The protein belongs to the WrbA family. FMN serves as cofactor.

The enzyme catalyses a quinone + NADH + H(+) = a quinol + NAD(+). It catalyses the reaction a quinone + NADPH + H(+) = a quinol + NADP(+). The chain is NAD(P)H dehydrogenase (quinone) from Paraburkholderia phymatum (strain DSM 17167 / CIP 108236 / LMG 21445 / STM815) (Burkholderia phymatum).